The following is a 175-amino-acid chain: Keratin-associated protein 13-2 (175 aa).

5 consecutive repeat copies span residues cysteine 46–glycine 55, cysteine 56–serine 65, cysteine 66–proline 75, cysteine 76–threonine 85, and cysteine 92–glycine 101. The 5 X 10 AA approximate repeats stretch occupies residues cysteine 46–glycine 101.

It belongs to the PMG family. Interacts with hair keratins.

In the hair cortex, hair keratin intermediate filaments are embedded in an interfilamentous matrix, consisting of hair keratin-associated proteins (KRTAP), which are essential for the formation of a rigid and resistant hair shaft through their extensive disulfide bond cross-linking with abundant cysteine residues of hair keratins. The matrix proteins include the high-sulfur and high-glycine-tyrosine keratins. The polypeptide is Keratin-associated protein 13-2 (KRTAP13-2) (Homo sapiens (Human)).